We begin with the raw amino-acid sequence, 609 residues long: Proteasome-associated ATPase (609 aa).

Residues 1–22 (MGESERSEAFNPPREAGMSSGD) are disordered. Positions 20–96 (SGDIAELEQL…LREEVDRLGQ (77 aa)) form a coiled coil. 296-301 (GCGKTL) lines the ATP pocket. The segment at 608 to 609 (YL) is docks into pockets in the proteasome alpha-ring.

Belongs to the AAA ATPase family. In terms of assembly, homohexamer. Assembles into a hexameric ring structure that caps the 20S proteasome core. Strongly interacts with the prokaryotic ubiquitin-like protein Pup through a hydrophobic interface; the interacting region of ARC lies in its N-terminal coiled-coil domain. There is one Pup binding site per ARC hexamer ring. Upon ATP-binding, the C-terminus of ARC interacts with the alpha-rings of the proteasome core, possibly by binding to the intersubunit pockets.

Its pathway is protein degradation; proteasomal Pup-dependent pathway. ATPase which is responsible for recognizing, binding, unfolding and translocation of pupylated proteins into the bacterial 20S proteasome core particle. May be essential for opening the gate of the 20S proteasome via an interaction with its C-terminus, thereby allowing substrate entry and access to the site of proteolysis. Thus, the C-termini of the proteasomal ATPase may function like a 'key in a lock' to induce gate opening and therefore regulate proteolysis. This chain is Proteasome-associated ATPase, found in Mycobacterium leprae (strain Br4923).